Reading from the N-terminus, the 625-residue chain is Threonine--tRNA ligase (625 aa).

The interval 1–147 (MRILLIHSDY…TIVPGEAKKE (147 aa)) is editing domain. Residues 206-505 (PHVKIMLEQE…MKKGKKPMYP (300 aa)) are catalytic. Positions 298, 350, and 474 each coordinate Zn(2+).

Belongs to the class-II aminoacyl-tRNA synthetase family. Homodimer. The cofactor is Zn(2+).

It localises to the cytoplasm. It carries out the reaction tRNA(Thr) + L-threonine + ATP = L-threonyl-tRNA(Thr) + AMP + diphosphate + H(+). Catalyzes the attachment of threonine to tRNA(Thr) in a two-step reaction: L-threonine is first activated by ATP to form Thr-AMP and then transferred to the acceptor end of tRNA(Thr). Also edits incorrectly charged L-seryl-tRNA(Thr). The chain is Threonine--tRNA ligase from Thermococcus sibiricus (strain DSM 12597 / MM 739).